A 294-amino-acid chain; its full sequence is IVFRAAQERSDIEIVAINDLLDAEYMAYMLKYDSTHGRFNGTVEVKDGHLIVNGKKIRVTAERDPANLKWNEAGVEVVAEATGLFLTDETARKHITAGAKKVVMTGPSKDSTPMFVRGANFDTYAGQDIVSNASCTTNCLAPLAKVVNDNFGIVEALMTTVHATTATQKTVDGPSHKDWRGGRGASQNIIPSSTGAAKAVGKVLPELNGKLTGMAFRVPTPNVSVVDLTVRLAKPATYEEIKKAMKAASEGAMKGVLGYTEDDVVSTDFNGETCTSVFDAKAGIALNDNFVKLV.

NAD(+) is bound by residues Asp-19, Arg-63, and Thr-105. Residues 134-136 (SCT), Thr-165, 194-195 (TG), and Arg-217 each bind D-glyceraldehyde 3-phosphate. Cys-135 functions as the Nucleophile in the catalytic mechanism.

It belongs to the glyceraldehyde-3-phosphate dehydrogenase family. In terms of assembly, homotetramer.

It localises to the cytoplasm. It catalyses the reaction D-glyceraldehyde 3-phosphate + phosphate + NAD(+) = (2R)-3-phospho-glyceroyl phosphate + NADH + H(+). Its pathway is carbohydrate degradation; glycolysis; pyruvate from D-glyceraldehyde 3-phosphate: step 1/5. In terms of biological role, catalyzes the oxidative phosphorylation of glyceraldehyde 3-phosphate (G3P) to 1,3-bisphosphoglycerate (BPG) using the cofactor NAD. The first reaction step involves the formation of a hemiacetal intermediate between G3P and a cysteine residue, and this hemiacetal intermediate is then oxidized to a thioester, with concomitant reduction of NAD to NADH. The reduced NADH is then exchanged with the second NAD, and the thioester is attacked by a nucleophilic inorganic phosphate to produce BPG. The chain is Glyceraldehyde-3-phosphate dehydrogenase (gap) from Shimwellia blattae (Escherichia blattae).